The chain runs to 470 residues: Neuraminidase (470 aa).

Residues 1 to 14 lie on the Intravirion side of the membrane; sequence MNPNQKIITIGSIS. The tract at residues 11–32 is involved in apical transport and lipid raft association; sequence GSISLGLVVFNVLLHVVSIIVT. The chain crosses the membrane as a helical span at residues 15–35; the sequence is LGLVVFNVLLHVVSIIVTVLI. A hypervariable stalk region region spans residues 32–86; the sequence is TVLILGKGENNGICNGTVVREYNETVRIERVTQWHNTNVVEYVPYWNGGTYMNNT. Residues 36-470 lie on the Virion surface side of the membrane; sequence LGKGENNGIC…AILPFDIDKM (435 aa). N-linked (GlcNAc...) asparagine; by host glycosylation is found at N46, N54, and N84. Residues 89–470 are head of neuraminidase; sequence ICDVKGFAPF…AILPFDIDKM (382 aa). 8 disulfide bridges follow: C90/C417, C122/C127, C182/C229, C231/C236, C277/C290, C279/C288, C316/C335, and C421/C446. R116 contacts substrate. A glycan (N-linked (GlcNAc...) asparagine; by host) is linked at N144. D149 functions as the Proton donor/acceptor in the catalytic mechanism. R150 contacts substrate. 275-276 contributes to the substrate binding site; that stretch reads EE. A substrate-binding site is contributed by R291. Ca(2+) is bound at residue D292. Residue N293 is glycosylated (N-linked (GlcNAc...) asparagine; by host). Residues G296 and D322 each contribute to the Ca(2+) site. R368 lines the substrate pocket. A glycan (N-linked (GlcNAc...) asparagine; by host) is linked at N398. Y402 (nucleophile) is an active-site residue.

Belongs to the glycosyl hydrolase 34 family. In terms of assembly, homotetramer. It depends on Ca(2+) as a cofactor. In terms of processing, N-glycosylated.

The protein localises to the virion membrane. Its subcellular location is the host apical cell membrane. It catalyses the reaction Hydrolysis of alpha-(2-&gt;3)-, alpha-(2-&gt;6)-, alpha-(2-&gt;8)- glycosidic linkages of terminal sialic acid residues in oligosaccharides, glycoproteins, glycolipids, colominic acid and synthetic substrates.. Inhibited by the neuraminidase inhibitors zanamivir (Relenza) and oseltamivir (Tamiflu). These drugs interfere with the release of progeny virus from infected cells and are effective against all influenza strains. Resistance to neuraminidase inhibitors is quite rare. Catalyzes the removal of terminal sialic acid residues from viral and cellular glycoconjugates. Cleaves off the terminal sialic acids on the glycosylated HA during virus budding to facilitate virus release. Additionally helps virus spread through the circulation by further removing sialic acids from the cell surface. These cleavages prevent self-aggregation and ensure the efficient spread of the progeny virus from cell to cell. Otherwise, infection would be limited to one round of replication. Described as a receptor-destroying enzyme because it cleaves a terminal sialic acid from the cellular receptors. May facilitate viral invasion of the upper airways by cleaving the sialic acid moieties on the mucin of the airway epithelial cells. Likely to plays a role in the budding process through its association with lipid rafts during intracellular transport. May additionally display a raft-association independent effect on budding. Plays a role in the determination of host range restriction on replication and virulence. Sialidase activity in late endosome/lysosome traffic seems to enhance virus replication. This chain is Neuraminidase, found in Influenza A virus (strain A/Turkey/Ireland/1378/1983 H5N8).